Here is a 421-residue protein sequence, read N- to C-terminus: Serine--tRNA ligase (421 aa).

Position 231-233 (231-233) interacts with L-serine; that stretch reads TAE. ATP is bound at residue 262-264; it reads RRE. E285 is an L-serine binding site. 349 to 352 contacts ATP; sequence EISS. S384 is an L-serine binding site.

The protein belongs to the class-II aminoacyl-tRNA synthetase family. Type-1 seryl-tRNA synthetase subfamily. In terms of assembly, homodimer. The tRNA molecule binds across the dimer.

The protein localises to the cytoplasm. The catalysed reaction is tRNA(Ser) + L-serine + ATP = L-seryl-tRNA(Ser) + AMP + diphosphate + H(+). It carries out the reaction tRNA(Sec) + L-serine + ATP = L-seryl-tRNA(Sec) + AMP + diphosphate + H(+). It participates in aminoacyl-tRNA biosynthesis; selenocysteinyl-tRNA(Sec) biosynthesis; L-seryl-tRNA(Sec) from L-serine and tRNA(Sec): step 1/1. Functionally, catalyzes the attachment of serine to tRNA(Ser). Is also able to aminoacylate tRNA(Sec) with serine, to form the misacylated tRNA L-seryl-tRNA(Sec), which will be further converted into selenocysteinyl-tRNA(Sec). This Hydrogenobaculum sp. (strain Y04AAS1) protein is Serine--tRNA ligase.